Here is a 362-residue protein sequence, read N- to C-terminus: N-acylethanolamine-hydrolyzing acid amidase (362 aa).

The signal sequence occupies residues 1–33 (MGTPAIRAACHGAHLALALLLLLSLSDPWLWAT). N-linked (GlcNAc...) asparagine glycans are attached at residues Asn42 and Asn112. The active-site Nucleophile is the Cys131. Residues Asn314 and Asn338 are each glycosylated (N-linked (GlcNAc...) asparagine).

This sequence belongs to the acid ceramidase family. Heterodimer of an alpha and a beta subunit, produced by autocatalytic cleavage. In terms of processing, N-glycosylated. Tunicamycin treatment causes a reduction in specific activity against N-palmitoylethanolamine. Post-translationally, autoproteolytic cleavage at pH 4.5 gives rise to the alpha and beta subunit. Cleavage gives rise to a conformation change that activates the enzyme. The same catalytic Cys residue mediates the autoproteolytic cleavage and subsequent hydrolysis of lipid substrates. Expressed in brain, cecum, colon, heart, ileum, kidney, liver, lung, spleen, stomach, submaxillary gland, testis and thymus.

It is found in the lysosome. The protein localises to the membrane. It carries out the reaction N-hexadecanoylethanolamine + H2O = ethanolamine + hexadecanoate. It catalyses the reaction an N-(long-chain fatty acyl)ethanolamine + H2O = a long-chain fatty acid + ethanolamine. The enzyme catalyses N-dodecanoylethanolamine + H2O = dodecanoate + ethanolamine. The catalysed reaction is N-tetradecanoylethanolamine + H2O = tetradecanoate + ethanolamine. It carries out the reaction an N-acylsphing-4-enine + H2O = sphing-4-enine + a fatty acid. It catalyses the reaction N-hexadecanoylsphing-4-enine + H2O = sphing-4-enine + hexadecanoate. The enzyme catalyses N-dodecanoylsphing-4-enine + H2O = dodecanoate + sphing-4-enine. Its pathway is lipid metabolism; fatty acid metabolism. With respect to regulation, stimulated by DTT. Stimulated by nonionic detergent of the polyoxyethylenep-t-octylphenylether type (Triton X-100 or Nonidet P-40) whereas 3-[(3-cholamidopropyl)dimethylammonio]propane-1-sulfonate (CHAPS) and octyl alpha-D-glucopyranoside decrease the N-(long-chain-acyl)ethanolamine deacylase activity. Polysorbate 20 (Tween 20) is inhibitory. Stimulated by endogenous phospholipids such as choline- or ethanolamine-containing phospholipids, and dihydrolipoic acid. Degrades bioactive fatty acid amides to their corresponding acids, with the following preference: N-palmitoylethanolamine &gt; N-myristoylethanolamine &gt; N-stearoylethanolamine &gt; N-oleoylethanolamine &gt; N-linoleoylethanolamine &gt; N-arachidonoylethanolamine. The polypeptide is N-acylethanolamine-hydrolyzing acid amidase (Rattus norvegicus (Rat)).